The following is a 342-amino-acid chain: P2Y purinoceptor 12 (342 aa).

Over 1–27 (MQAVDNLTSAPGNTSLCTRDYKITQVL) the chain is Extracellular. N-linked (GlcNAc...) asparagine glycans are attached at residues asparagine 6 and asparagine 13. Intrachain disulfides connect cysteine 17-cysteine 270 and cysteine 97-cysteine 175. The chain crosses the membrane as a helical span at residues 28–50 (FPLLYTVLFFVGLITNGLAMRIF). At 51–61 (FQIRSKSNFII) the chain is on the cytoplasmic side. Serine 55 and serine 57 each carry phosphoserine. A helical transmembrane segment spans residues 62–82 (FLKNTVISDLLMILTFPFKIL). Residues 83–97 (SDAKLGTGPLRTFVC) lie on the Extracellular side of the membrane. ADP-binding residues include arginine 93, cysteine 97, and tyrosine 105. The helical transmembrane segment at 98-118 (QVTSVIFYFTMYISISFLGLI) threads the bilayer. The Cytoplasmic portion of the chain corresponds to 119–142 (TIDRYQKTTRPFKTSNPKNLLGAK). Residues 143–162 (ILSVVIWAFMFLLSLPNMIL) traverse the membrane as a helical segment. Residues 156-159 (SLPN), 175-179 (CSFLK), histidine 187, and asparagine 191 contribute to the ADP site. Topologically, residues 163–185 (TNRQPRDKNVKKCSFLKSEFGLV) are extracellular. The chain crosses the membrane as a helical span at residues 186–207 (WHEIVNYICQVIFWINFLIVIV). Residues 208 to 233 (CYTLITKELYRSYVRTRGVGKVPRKK) are Cytoplasmic-facing. Residues 234–259 (VNVKVFIIIAVFFICFVPFHFARIPY) form a helical membrane-spanning segment. ADP contacts are provided by residues 256 to 259 (RIPY), glutamine 263, and lysine 280. The Extracellular portion of the chain corresponds to 260 to 278 (TLSQTRDVFDCTAENTLFY). A helical membrane pass occupies residues 279–298 (VKESTLWLTSLNACLDPFIY). At 299–342 (FFLCKSFRNSLISMLKCPNSATSLSQDNRKKEQDGGDPNEETPM) the chain is on the cytoplasmic side. Residues 319-342 (ATSLSQDNRKKEQDGGDPNEETPM) form a disordered region. The span at 333–342 (GGDPNEETPM) shows a compositional bias: acidic residues.

This sequence belongs to the G-protein coupled receptor 1 family. In terms of tissue distribution, highly expressed in the platelets, lower levels in the brain. Lowest levels in the lung, appendix, pituitary and adrenal gland. Expressed in the spinal cord and in the fetal brain.

It is found in the cell membrane. Its function is as follows. Receptor for ADP and ATP coupled to G-proteins that inhibit the adenylyl cyclase second messenger system. Not activated by UDP and UTP. Required for normal platelet aggregation and blood coagulation. The protein is P2Y purinoceptor 12 (P2RY12) of Homo sapiens (Human).